The chain runs to 82 residues: ATP synthase subunit c (82 aa).

2 consecutive transmembrane segments (helical) span residues 3–23 (PLVA…ASLG) and 57–77 (LAFM…LLFA).

The protein belongs to the ATPase C chain family. In terms of assembly, F-type ATPases have 2 components, F(1) - the catalytic core - and F(0) - the membrane proton channel. F(1) has five subunits: alpha(3), beta(3), gamma(1), delta(1), epsilon(1). F(0) has four main subunits: a(1), b(1), b'(1) and c(10-14). The alpha and beta chains form an alternating ring which encloses part of the gamma chain. F(1) is attached to F(0) by a central stalk formed by the gamma and epsilon chains, while a peripheral stalk is formed by the delta, b and b' chains.

The protein localises to the cellular thylakoid membrane. Functionally, f(1)F(0) ATP synthase produces ATP from ADP in the presence of a proton or sodium gradient. F-type ATPases consist of two structural domains, F(1) containing the extramembraneous catalytic core and F(0) containing the membrane proton channel, linked together by a central stalk and a peripheral stalk. During catalysis, ATP synthesis in the catalytic domain of F(1) is coupled via a rotary mechanism of the central stalk subunits to proton translocation. In terms of biological role, key component of the F(0) channel; it plays a direct role in translocation across the membrane. A homomeric c-ring of between 10-14 subunits forms the central stalk rotor element with the F(1) delta and epsilon subunits. The polypeptide is ATP synthase subunit c (Synechococcus sp. (strain PCC 6716)).